The primary structure comprises 228 residues: Cytochrome P450 monooxygenase ataY (228 aa).

Heme is bound at residue Cys-216.

It belongs to the cytochrome P450 family. The cofactor is heme.

It functions in the pathway mycotoxin biosynthesis. Its function is as follows. Cytochrome P450 monooxygenase; part of the gene cluster that mediates the biosynthesis of acetylaranotin, a member of the epipolythiodioxopiperazine (ETP) class of toxins characterized by a disulfide-bridged cyclic dipeptide. The first step of acetylaranotin biosynthesis is performed by the NRPS ataP which produces diketopiperazine cyclo-L-Phe-L-Phe via the condensation of 2 phenylalanines (L-Phe). The ataC domain of ataTC then catalyzes the formation of bishydroxylation of cyclo-L-Phe-L-Phe. The glutathione S-transferase domain ataG in ataIMG further catalyzes the conjugation of two glutathiones to the bishydroxylated intermediate. Next, the dipeptidase ataJ removes the Glu residues. The following step is performed by the carbon sulfur lyase domain ataI of ataIMG which may convert the bis-cysteinyl adduct to yield an epidithiol intermediate. The ataT domain from ataTC then catalyzes the oxidation of the free dithiols, followed by a cyclization step catalyzed by the cytochrome P450 ataF. AtaF probably acts as an epoxidase to promote a dual epoxidation formation at C8 and C9 along with C8' and C9', followed by the spontaneous nucleophilic attack of the amide nitrogens N10 and N10' to yield an intermediate with the pyrrolidine partial structure. The final steps of acetylaranotin biosynthesis involve the acetylation and ring rearrangement of an epitetrathiodiketopiperazine intermediate to produce acetylaranotin. AtaH probably catalyzes the acetylation of epitetrathiodiketopiperazine to produce a diacetate and ataY is responsible for the formation of the dihydrooxepin moiety that converts the diacetate intermediate to acetylaranotin via acetylapoaranotin. Both enzymes could function independently in the absence of the other. The acetylaranotin bis-thiomethyltransferase ataS located outside of acetylaranotin gene cluster is the main thiomethyltransferase responsible for converting acetylaranotin and its related intermediates to their methylated forms. The polypeptide is Cytochrome P450 monooxygenase ataY (Aspergillus terreus (strain NIH 2624 / FGSC A1156)).